The chain runs to 518 residues: 2-isopropylmalate synthase (518 aa).

In terms of domain architecture, Pyruvate carboxyltransferase spans Ile5–Ile269. Residues Asp14, His204, His206, and Asn240 each coordinate Mn(2+). The interval Glu397 to Arg518 is regulatory domain.

This sequence belongs to the alpha-IPM synthase/homocitrate synthase family. LeuA type 1 subfamily. In terms of assembly, homodimer. The cofactor is Mn(2+).

It is found in the cytoplasm. The catalysed reaction is 3-methyl-2-oxobutanoate + acetyl-CoA + H2O = (2S)-2-isopropylmalate + CoA + H(+). Its pathway is amino-acid biosynthesis; L-leucine biosynthesis; L-leucine from 3-methyl-2-oxobutanoate: step 1/4. Functionally, catalyzes the condensation of the acetyl group of acetyl-CoA with 3-methyl-2-oxobutanoate (2-ketoisovalerate) to form 3-carboxy-3-hydroxy-4-methylpentanoate (2-isopropylmalate). This chain is 2-isopropylmalate synthase, found in Geobacillus sp. (strain Y412MC10).